The primary structure comprises 209 residues: Outer-membrane lipoprotein LolB (209 aa).

An N-terminal signal peptide occupies residues Met1–Gly17. Cys18 carries N-palmitoyl cysteine lipidation. The S-diacylglycerol cysteine moiety is linked to residue Cys18.

Belongs to the LolB family. Monomer.

The protein resides in the cell outer membrane. Plays a critical role in the incorporation of lipoproteins in the outer membrane after they are released by the LolA protein. This Haemophilus ducreyi (strain 35000HP / ATCC 700724) protein is Outer-membrane lipoprotein LolB.